A 133-amino-acid polypeptide reads, in one-letter code: MDKKTIYFICSGNSCRSQMAEGWGKEILGEDWNVYSAGIETHGVNPKAIEAMKEVDIDISNHTSDLIDSDILEQSDLVVTLCSDADDNCPILPPNVKKEHWGFDDPAGKEWPEFQRVRDEIGKRIQEFKETLV.

Active-site nucleophile residues include Cys10, Cys82, and Cys89. 2 cysteine pairs are disulfide-bonded: Cys10–Cys82 and Cys82–Cys89.

Belongs to the low molecular weight phosphotyrosine protein phosphatase family. Thioredoxin-coupled ArsC subfamily.

The protein resides in the cytoplasm. It catalyses the reaction arsenate + [thioredoxin]-dithiol + H(+) = arsenite + [thioredoxin]-disulfide + H2O. In terms of biological role, catalyzes the reduction of arsenate [As(V)] to arsenite [As(III)]. The polypeptide is Arsenate reductase 1 (Staphylococcus haemolyticus (strain JCSC1435)).